The sequence spans 246 residues: C-X-C motif chemokine 16 (246 aa).

Positions 1–26 are cleaved as a signal peptide; the sequence is MRRGFGPLSLAFFLFLLALLTLPGDG. Residues 27-201 are Extracellular-facing; sequence NQGSVAGSCS…PGAGASTPAW (175 aa). Intrachain disulfides connect Cys-35–Cys-65 and Cys-37–Cys-79. 2 disordered regions span residues 104–150 and 175–198; these read GKSF…SGAL and PEAEANEKQQDDRQQEAPGAGAST. Residues 128-146 show a composition bias toward polar residues; sequence PSDTSTPAHSQSTQHSTLP. A compositionally biased stretch (basic and acidic residues) spans 175–189; sequence PEAEANEKQQDDRQQ. Residues 202 to 222 form a helical membrane-spanning segment; the sequence is VPVLSLLAIVFFLTAAMAYVL. The Cytoplasmic segment spans residues 223–246; sequence CNRRATQQNSAGLQLWYTPVEPRP.

It belongs to the intercrine alpha (chemokine CxC) family. Glycosylated. In terms of tissue distribution, widely expressed. Not detected in purified B- and T-cells.

It localises to the membrane. In terms of biological role, induces a strong chemotactic response. Induces calcium mobilization. Binds to CXCR6/Bonzo. Also acts as a scavenger receptor on macrophages, which specifically binds to OxLDL (oxidized low density lipoprotein), suggesting that it may be involved in pathophysiology such as atherogenesis. The sequence is that of C-X-C motif chemokine 16 (Cxcl16) from Mus musculus (Mouse).